A 361-amino-acid chain; its full sequence is MSDLESLKTSLLADIAAASDEVGIEAVRLAAMGKKGSVSELLKTLGSMTPEERQTRGAAINALKNEITEQLTAKKTELKDAAINARLKAETLDVSLPVRSSPAERGRIHPISQIVDEITAIFADMGFSIAEGPDIETDYYNFTALNFPEGHPAREMHDTFFLQPDANGERKVLRTHTSPVQVRTMEAQKPPIRIVIPGKTYRQDSDATHSPMFHQVEGLVIDKTANVGHLRWILEEFCKTFFEVDSVTMRFRPSFFPFTEPSFEVDIQCDRSSGPIVKFGEGKDWMEILGCGMVHPNVLRAGGLDPDEYQGFAWGMGLDRIAMLKYGMPDLRDFFNADVRWMSHYGFRPLDVPTLFGGLSV.

Glu260 serves as a coordination point for Mg(2+).

The protein belongs to the class-II aminoacyl-tRNA synthetase family. Phe-tRNA synthetase alpha subunit type 1 subfamily. As to quaternary structure, tetramer of two alpha and two beta subunits. It depends on Mg(2+) as a cofactor.

The protein localises to the cytoplasm. It carries out the reaction tRNA(Phe) + L-phenylalanine + ATP = L-phenylalanyl-tRNA(Phe) + AMP + diphosphate + H(+). The protein is Phenylalanine--tRNA ligase alpha subunit of Allorhizobium ampelinum (strain ATCC BAA-846 / DSM 112012 / S4) (Agrobacterium vitis (strain S4)).